Here is a 113-residue protein sequence, read N- to C-terminus: Large ribosomal subunit protein eL31B (113 aa).

Belongs to the eukaryotic ribosomal protein eL31 family. Component of the large ribosomal subunit (LSU). Mature yeast ribosomes consist of a small (40S) and a large (60S) subunit. The 40S small subunit contains 1 molecule of ribosomal RNA (18S rRNA) and 33 different proteins (encoded by 57 genes). The large 60S subunit contains 3 rRNA molecules (25S, 5.8S and 5S rRNA) and 46 different proteins (encoded by 81 genes).

It is found in the cytoplasm. In terms of biological role, component of the ribosome, a large ribonucleoprotein complex responsible for the synthesis of proteins in the cell. The small ribosomal subunit (SSU) binds messenger RNAs (mRNAs) and translates the encoded message by selecting cognate aminoacyl-transfer RNA (tRNA) molecules. The large subunit (LSU) contains the ribosomal catalytic site termed the peptidyl transferase center (PTC), which catalyzes the formation of peptide bonds, thereby polymerizing the amino acids delivered by tRNAs into a polypeptide chain. The nascent polypeptides leave the ribosome through a tunnel in the LSU and interact with protein factors that function in enzymatic processing, targeting, and the membrane insertion of nascent chains at the exit of the ribosomal tunnel. This is Large ribosomal subunit protein eL31B from Saccharomyces cerevisiae (strain ATCC 204508 / S288c) (Baker's yeast).